Consider the following 125-residue polypeptide: Small ribosomal subunit protein uS13 (125 aa).

The segment at 95-125 is disordered; that stretch reads GLPVNGQRTRTNARTRKGVKKTVANKKKATK. The segment covering 105–125 has biased composition (basic residues); sequence TNARTRKGVKKTVANKKKATK.

It belongs to the universal ribosomal protein uS13 family. In terms of assembly, part of the 30S ribosomal subunit. Forms a loose heterodimer with protein S19. Forms two bridges to the 50S subunit in the 70S ribosome.

Functionally, located at the top of the head of the 30S subunit, it contacts several helices of the 16S rRNA. In the 70S ribosome it contacts the 23S rRNA (bridge B1a) and protein L5 of the 50S subunit (bridge B1b), connecting the 2 subunits; these bridges are implicated in subunit movement. Contacts the tRNAs in the A and P-sites. The protein is Small ribosomal subunit protein uS13 of Leptospira biflexa serovar Patoc (strain Patoc 1 / Ames).